The chain runs to 275 residues: F420-dependent methylenetetrahydromethanopterin dehydrogenase (275 aa).

The protein belongs to the MTD family.

It carries out the reaction 5,10-methylenetetrahydromethanopterin + oxidized coenzyme F420-(gamma-L-Glu)(n) + 2 H(+) = 5,10-methenyl-5,6,7,8-tetrahydromethanopterin + reduced coenzyme F420-(gamma-L-Glu)(n). Its pathway is one-carbon metabolism; methanogenesis from CO(2); 5,10-methylene-5,6,7,8-tetrahydromethanopterin from 5,10-methenyl-5,6,7,8-tetrahydromethanopterin (coenzyme F420 route): step 1/1. In terms of biological role, catalyzes the reversible reduction of methenyl-H(4)MPT(+) to methylene-H(4)MPT. The sequence is that of F420-dependent methylenetetrahydromethanopterin dehydrogenase from Methanobrevibacter smithii (strain ATCC 35061 / DSM 861 / OCM 144 / PS).